Reading from the N-terminus, the 176-residue chain is Ribosome maturation factor RimM (176 aa).

Positions 96–176 (PEDEFYWRDL…QILVDWDPDF (81 aa)) constitute a PRC barrel domain.

The protein belongs to the RimM family. As to quaternary structure, binds ribosomal protein uS19.

It is found in the cytoplasm. In terms of biological role, an accessory protein needed during the final step in the assembly of 30S ribosomal subunit, possibly for assembly of the head region. Essential for efficient processing of 16S rRNA. May be needed both before and after RbfA during the maturation of 16S rRNA. It has affinity for free ribosomal 30S subunits but not for 70S ribosomes. The protein is Ribosome maturation factor RimM of Shewanella woodyi (strain ATCC 51908 / MS32).